Here is a 253-residue protein sequence, read N- to C-terminus: Probable transcriptional regulatory protein Tlet_1011 (253 aa).

Belongs to the TACO1 family.

It is found in the cytoplasm. This is Probable transcriptional regulatory protein Tlet_1011 from Pseudothermotoga lettingae (strain ATCC BAA-301 / DSM 14385 / NBRC 107922 / TMO) (Thermotoga lettingae).